The following is a 935-amino-acid chain: Phosphoenolpyruvate carboxylase (935 aa).

Residues His161 and Lys593 contribute to the active site.

The protein belongs to the PEPCase type 1 family. Mg(2+) is required as a cofactor.

The catalysed reaction is oxaloacetate + phosphate = phosphoenolpyruvate + hydrogencarbonate. Forms oxaloacetate, a four-carbon dicarboxylic acid source for the tricarboxylic acid cycle. The polypeptide is Phosphoenolpyruvate carboxylase (Mycobacterium avium (strain 104)).